A 451-amino-acid chain; its full sequence is Probable glycine dehydrogenase (decarboxylating) subunit 1 (451 aa).

Belongs to the GcvP family. N-terminal subunit subfamily. The glycine cleavage system is composed of four proteins: P, T, L and H. In this organism, the P 'protein' is a heterodimer of two subunits.

It carries out the reaction N(6)-[(R)-lipoyl]-L-lysyl-[glycine-cleavage complex H protein] + glycine + H(+) = N(6)-[(R)-S(8)-aminomethyldihydrolipoyl]-L-lysyl-[glycine-cleavage complex H protein] + CO2. Its function is as follows. The glycine cleavage system catalyzes the degradation of glycine. The P protein binds the alpha-amino group of glycine through its pyridoxal phosphate cofactor; CO(2) is released and the remaining methylamine moiety is then transferred to the lipoamide cofactor of the H protein. The chain is Probable glycine dehydrogenase (decarboxylating) subunit 1 from Thermococcus kodakarensis (strain ATCC BAA-918 / JCM 12380 / KOD1) (Pyrococcus kodakaraensis (strain KOD1)).